The chain runs to 255 residues: Large ribosomal subunit protein uL4 (255 aa).

This sequence belongs to the universal ribosomal protein uL4 family. In terms of assembly, part of the 50S ribosomal subunit.

Its function is as follows. One of the primary rRNA binding proteins, this protein initially binds near the 5'-end of the 23S rRNA. It is important during the early stages of 50S assembly. It makes multiple contacts with different domains of the 23S rRNA in the assembled 50S subunit and ribosome. Functionally, forms part of the polypeptide exit tunnel. The polypeptide is Large ribosomal subunit protein uL4 (Thermococcus gammatolerans (strain DSM 15229 / JCM 11827 / EJ3)).